Here is an 85-residue protein sequence, read N- to C-terminus: Large ribosomal subunit protein bL27 (85 aa).

The protein belongs to the bacterial ribosomal protein bL27 family.

The sequence is that of Large ribosomal subunit protein bL27 from Vesicomyosocius okutanii subsp. Calyptogena okutanii (strain HA).